The primary structure comprises 103 residues: MAAKIRQNDEVIVLTGKDKGKRGKVTQVLPNGKVIVEGVKIITKHEKPVPALGKAGGLVKKEAAIDASNIAIFNPKTNKADRVGFRFEDGKKVRFFKSNNEII.

Belongs to the universal ribosomal protein uL24 family. In terms of assembly, part of the 50S ribosomal subunit.

Its function is as follows. One of two assembly initiator proteins, it binds directly to the 5'-end of the 23S rRNA, where it nucleates assembly of the 50S subunit. In terms of biological role, one of the proteins that surrounds the polypeptide exit tunnel on the outside of the subunit. The sequence is that of Large ribosomal subunit protein uL24 from Actinobacillus pleuropneumoniae serotype 5b (strain L20).